A 395-amino-acid polypeptide reads, in one-letter code: Elongation factor Tu (395 aa).

The 195-residue stretch at 10–204 (KPHVNIGTIG…AVDEYIPTPQ (195 aa)) folds into the tr-type G domain. A G1 region spans residues 19-26 (GHVDHGKT). Position 19 to 26 (19 to 26 (GHVDHGKT)) interacts with GTP. Thr26 is a binding site for Mg(2+). The tract at residues 60–64 (GITIS) is G2. The G3 stretch occupies residues 81 to 84 (DCPG). GTP-binding positions include 81-85 (DCPGH) and 136-139 (NKCD). Residues 136–139 (NKCD) are G4. Residues 174-176 (SAL) form a G5 region.

This sequence belongs to the TRAFAC class translation factor GTPase superfamily. Classic translation factor GTPase family. EF-Tu/EF-1A subfamily. In terms of assembly, monomer.

It localises to the cytoplasm. It carries out the reaction GTP + H2O = GDP + phosphate + H(+). In terms of biological role, GTP hydrolase that promotes the GTP-dependent binding of aminoacyl-tRNA to the A-site of ribosomes during protein biosynthesis. This Geobacillus stearothermophilus (Bacillus stearothermophilus) protein is Elongation factor Tu.